The sequence spans 454 residues: Membrane-bound lytic murein transglycosylase F (454 aa).

Positions 1–24 (MRRPLRRVTVVLLWVALAIGVAWF) are cleaved as a signal peptide. The segment at 25-265 (YDYRRSMQSL…IYNRYYTAVD (241 aa)) is non-LT domain. Residues 266–454 (TFDYVDVKKF…YDILKQKKAV (189 aa)) form an LT domain region. Residue Glu311 is part of the active site.

This sequence in the N-terminal section; belongs to the bacterial solute-binding protein 3 family. The protein in the C-terminal section; belongs to the transglycosylase Slt family.

The protein resides in the cell outer membrane. It carries out the reaction Exolytic cleavage of the (1-&gt;4)-beta-glycosidic linkage between N-acetylmuramic acid (MurNAc) and N-acetylglucosamine (GlcNAc) residues in peptidoglycan, from either the reducing or the non-reducing ends of the peptidoglycan chains, with concomitant formation of a 1,6-anhydrobond in the MurNAc residue.. In terms of biological role, murein-degrading enzyme that degrades murein glycan strands and insoluble, high-molecular weight murein sacculi, with the concomitant formation of a 1,6-anhydromuramoyl product. Lytic transglycosylases (LTs) play an integral role in the metabolism of the peptidoglycan (PG) sacculus. Their lytic action creates space within the PG sacculus to allow for its expansion as well as for the insertion of various structures such as secretion systems and flagella. In Desulfosudis oleivorans (strain DSM 6200 / JCM 39069 / Hxd3) (Desulfococcus oleovorans), this protein is Membrane-bound lytic murein transglycosylase F.